A 248-amino-acid chain; its full sequence is Probable transcriptional regulatory protein RHOS4_22610 (248 aa).

The segment at 1-21 is disordered; it reads MAGHSKWANIQHRKGKQDKLR.

The protein belongs to the TACO1 family.

It localises to the cytoplasm. The chain is Probable transcriptional regulatory protein RHOS4_22610 from Cereibacter sphaeroides (strain ATCC 17023 / DSM 158 / JCM 6121 / CCUG 31486 / LMG 2827 / NBRC 12203 / NCIMB 8253 / ATH 2.4.1.) (Rhodobacter sphaeroides).